The primary structure comprises 496 residues: RNA-binding motif protein, Y chromosome, family 1 member D (496 aa).

Positions 8-85 constitute an RRM domain; that stretch reads GKLFIGGLNR…KAIKVEQAKK (78 aa). Disordered stretches follow at residues 67 to 349 and 452 to 496; these read DMNG…HRDY and KDQR…SSRY. Low complexity-rich tracts occupy residues 97–114 and 149–159; these read PASSRNRSPSGSLRSARG and PVKRGPSSRSG. Over residues 175–184 the composition is skewed to polar residues; that stretch reads NSWMGSQGPM. Composition is skewed to basic and acidic residues over residues 204–214, 242–253, 276–289, 313–326, 335–349, and 484–496; these read RNDRMSTRHDG, DNGHSNRDEHSS, AYRDYGHSRRDESY, GYRDYGHSRRHESY, SSRETRDYAPPHRDY, and GESRSEKGDSSRY.

In terms of assembly, interacts with splicing factor proteins SFRS3/SRP20, TRA2B/SFRS10, KHDRBS1/SAM68 and KHDRBS3. In terms of tissue distribution, testis-specific.

Its subcellular location is the nucleus. RNA-binding protein which may be involved in spermatogenesis. Required for sperm development, possibly by participating in pre-mRNA splicing in the testis. The protein is RNA-binding motif protein, Y chromosome, family 1 member D (RBMY1D) of Homo sapiens (Human).